The following is a 239-amino-acid chain: RBPJ-interacting and tubulin-associated protein 1 (239 aa).

Positions 12–24 (LDLSITGHSTALP) match the Nuclear export signal motif. 2 disordered regions span residues 62–97 (APPS…TPRK) and 149–239 (LVQQ…PPWK). The Nuclear localization signal motif lies at 93 to 109 (GTPRKKIQYRVKSRTPS). Positions 129–158 (WVKKEDTVKIRPLLWSPSPRLVQQSSMQNA) are interaction with RBPJ/RBPSUH. Polar residues-rich tracts occupy residues 149–159 (LVQQSSMQNAK) and 203–221 (RQRQ…SCSG). The tract at residues 158-239 (AKQGPLRAVH…VKMQERPPWK (82 aa)) is interaction with tubulin.

The protein belongs to the RITA family. As to quaternary structure, interacts with rbpj/rbpsuh.

The protein resides in the cytoplasm. Its subcellular location is the nucleus. Its function is as follows. Tubulin-binding protein that acts as a negative regulator of Notch signaling pathway. Shuttles between the cytoplasm and the nucleus and mediates the nuclear export of rbpj/rbpsuh, thereby preventing the interaction between rbpj/rbpsuh and NICD product of Notch proteins (Notch intracellular domain), leading to down-regulate Notch-mediated transcription. May play a role in neurogenesis. This Xenopus laevis (African clawed frog) protein is RBPJ-interacting and tubulin-associated protein 1 (rita1).